A 145-amino-acid polypeptide reads, in one-letter code: uncharacterized protein (145 aa).

It belongs to the SAP18 family.

The protein localises to the cytoplasm. It is found in the nucleus. This is an uncharacterized protein from Schizosaccharomyces pombe (strain 972 / ATCC 24843) (Fission yeast).